Consider the following 336-residue polypeptide: MATIKDVAKLAGVSTTTVSHVINKTRFVAEDTSKAVWDAIQQLNYSPSAVARSLKVNTTKSIGMIITTSEAPYFAEIVLAVEEHCYQQGYSLFLCNTQNEPEKIQNHLDMLIKKRVDGVLVMCSEYTRDSLELFNGTNIPMVVMDWGKADDHSDRILDNSFEGGYLATQHLIENGHKDIGVIAGHLSKTLSKERYEGFLKAMHEANLPVRQEWIYEGDFEPESGFEQMNNLLRLEKLPTAIFCFSDTIALGAISALSEKGLSVPSDMSIIGYDNIHSSRFYSPPLTTIHQSKSRLGVKALNILLERIKIDKTQYQPQTIEFHPELVLRRSVRNLNK.

Positions 2–56 (ATIKDVAKLAGVSTTTVSHVINKTRFVAEDTSKAVWDAIQQLNYSPSAVARSLKV) constitute an HTH lacI-type domain. The segment at residues 4-23 (IKDVAKLAGVSTTTVSHVIN) is a DNA-binding region (H-T-H motif). Residues 48–56 (SAVARSLKV) mediate DNA binding. Hypoxanthine is bound by residues tyrosine 73, lysine 188, phenylalanine 219, and aspartate 273.

As to quaternary structure, homodimer.

It participates in purine metabolism; purine nucleotide biosynthesis [regulation]. Its function is as follows. Is the main repressor of the genes involved in the de novo synthesis of purine nucleotides, regulating purB, purC, purEK, purF, purHD, purL, purMN and guaBA expression. PurR is allosterically activated to bind its cognate DNA by binding the purine corepressors, hypoxanthine or guanine, thereby effecting transcription repression. The polypeptide is HTH-type transcriptional repressor PurR (Actinobacillus pleuropneumoniae serotype 3 (strain JL03)).